Reading from the N-terminus, the 62-residue chain is Light-harvesting protein B-870 alpha chain (62 aa).

Residue M1 is modified to N-formylmethionine. Topologically, residues 1 to 12 (MWRIWQLFDPRQ) are cytoplasmic. Residues 13–33 (ALVGLATFLFVLALLIHFILL) traverse the membrane as a helical segment. An a bacteriochlorophyll-binding site is contributed by H29. Topologically, residues 34-52 (STERFNWLEGASTKPVQTS) are periplasmic. Positions 53 to 62 (MVMPSSDLAV) are excised as a propeptide.

It belongs to the antenna complex alpha subunit family. In terms of assembly, the core complex is formed by different alpha and beta chains, binding bacteriochlorophyll molecules, and arranged most probably in tetrameric structures disposed around the reaction center. The non-pigmented gamma chains may constitute additional components.

Its subcellular location is the cell inner membrane. Functionally, antenna complexes are light-harvesting systems, which transfer the excitation energy to the reaction centers. The sequence is that of Light-harvesting protein B-870 alpha chain from Rhodospirillum rubrum.